The primary structure comprises 466 residues: Tubulointerstitial nephritis antigen-like (466 aa).

The signal sequence occupies residues 1–21; the sequence is MWGCWLGLLLLLLAGQAALEA. Positions 49–96 constitute an SMB domain; that stretch reads EQDMCCRGRADECALPYLGATCYCDLFCNRTVSDCCPDFWDFCLGIPP. 5 cysteine pairs are disulfide-bonded: C53–C72, C70–C72, C70–C84, C76–C83, and C84–C91. An N-linked (GlcNAc...) asparagine glycan is attached at N77. Residue N160 is glycosylated (N-linked (GlcNAc...) asparagine).

Belongs to the peptidase C1 family. Post-translationally, glycosylated. In terms of tissue distribution, highly expressed in kidney, heart and adrenocortical cells of adrenal glands. Moderately expressed in spleen and liver. Also found in prostate, seminal vesicle, epididymis and testis in male reproductive organs. In adrenal glands is found in the outer cortical regions corresponding to the zona glomerulosa (zG) and the undifferentiated cell zone (zU) (at protein level).

It is found in the secreted. Functionally, may be implicated in the adrenocortical zonation and in mechanisms for repressing the CYP11B1 gene expression in adrenocortical cells. This is a non catalytic peptidase C1 family protein. In Mus musculus (Mouse), this protein is Tubulointerstitial nephritis antigen-like (Tinagl1).